Reading from the N-terminus, the 3432-residue chain is Genome polyprotein (3432 aa).

Positions 2-15 (TKKPGGPGKNRAIN) are interaction with host EXOC1. Over 2-109 (TKKPGGPGKN…RKQNKRGGNE (108 aa)) the chain is Cytoplasmic. The hydrophobic; homodimerization of capsid protein C stretch occupies residues 37–72 (LLDGRGPVRFVLALITFFKFTALAPTKALLGRWKAV). Residues 106–127 (GGNEGSIMWLASLAVVIACAGA) constitute a propeptide, ER anchor for the capsid protein C, removed in mature form by serine protease NS3. Residues 110-130 (GSIMWLASLAVVIACAGAMKL) traverse the membrane as a helical segment. The Extracellular segment spans residues 131–253 (SNFQGKLLMT…ATRYLMKTEN (123 aa)). Asn142 is a glycosylation site (N-linked (GlcNAc...) asparagine; by host). The chain crosses the membrane as a helical span at residues 254–274 (WIIRNPGYAFLAAVLGWMLGS). At 275–279 (NNGQR) the chain is on the cytoplasmic side. The chain crosses the membrane as a helical span at residues 280-294 (VVFTILLLLVAPAYS). Residues 295-746 (FNCLGMGNRD…QVFGGAFRTL (452 aa)) are Extracellular-facing. 6 disulfide bridges follow: Cys297–Cys324, Cys354–Cys410, Cys354–Cys415, Cys368–Cys399, Cys386–Cys410, and Cys386–Cys415. Residues 392-405 (DRGWGNGCGLFGKG) form a fusion peptide region. N-linked (GlcNAc...) asparagine; by host glycosylation is present at Asn448. 2 cysteine pairs are disulfide-bonded: Cys484–Cys581 and Cys598–Cys629. Residues 747–767 (FGGMSWITQGLMGALLLWMGV) form a helical membrane-spanning segment. Residues 768–773 (NARDRS) are Cytoplasmic-facing. A helical transmembrane segment spans residues 774 to 794 (IALAFLATGGVLVFLATNVHA). At 795 to 1219 (DTGCAIDITR…AFAEANSGGD (425 aa)) the chain is on the extracellular side. 6 disulfides stabilise this stretch: Cys798–Cys809, Cys849–Cys937, Cys973–Cys1017, Cys1074–Cys1123, Cys1085–Cys1106, and Cys1107–Cys1110. 2 N-linked (GlcNAc...) asparagine; by host glycosylation sites follow: Asn924 and Asn1001. The helical transmembrane segment at 1220–1240 (VLHLALIAVFKIQPAFLVMNM) threads the bilayer. Residues 1241 to 1250 (LSTRWTNQEN) lie on the Cytoplasmic side of the membrane. A helical transmembrane segment spans residues 1251-1271 (VVLVLGAAFFQLASVDLQIGV). Residue His1272 is a topological domain, lumenal. Residues 1273 to 1293 (GILNAAAIAWMIVRAITFPTT) traverse the membrane as a helical segment. At 1294-1309 (SSVTMPVLALLTPGMR) the chain is on the cytoplasmic side. Residues 1310 to 1330 (ALYLDTYRIILLVIGICSLLH) traverse the membrane as a helical segment. Topologically, residues 1331-1341 (ERKKTMAKKKG) are lumenal. The helical transmembrane segment at 1342-1362 (AVLLGLALTSTGWFSPTTIAA) threads the bilayer. The Cytoplasmic portion of the chain corresponds to 1363–1374 (GLMVCNPNKKRG). Residues 1375–1395 (WPATEFLSAVGLMFAIVGGLA) traverse the membrane as a helical segment. The Lumenal portion of the chain corresponds to 1396-1398 (ELD). The chain crosses the membrane as a helical span at residues 1399-1419 (IESMSIPFMLAGLMAVSYVVS). Residues 1420–1476 (GKATDMWLERAADISWEMDAAITGSSRRLDVKLDDDGDFHLIDDPGVPWKVWVLRMS) lie on the Cytoplasmic side of the membrane. Positions 1427–1466 (LERAADISWEMDAAITGSSRRLDVKLDDDGDFHLIDDPGV) are interacts with and activates NS3 protease. The segment at residues 1477 to 1497 (CIGLAALTPWAIVPAAFGYWL) is an intramembrane region (helical). Residues 1498-2173 (TLKTTKRGGV…RMALEELPDA (676 aa)) are Cytoplasmic-facing. In terms of domain architecture, Peptidase S7 spans 1505-1682 (GGVFWDTPSP…DRQEEPVPEA (178 aa)). Residues His1555, Asp1579, and Ser1639 each act as charge relay system; for serine protease NS3 activity in the active site. One can recognise a Helicase ATP-binding domain in the interval 1685-1841 (PNMLRKRQMT…DSNAPIHDLQ (157 aa)). Positions 1689-1692 (RKRQ) are important for RNA-binding. Residue 1698 to 1705 (LHPGSGKT) participates in ATP binding. The short motif at 1789–1792 (DEAH) is the DEAH box element. The region spanning 1852-2017 (GYEWITEYAG…GLVAQLYGPE (166 aa)) is the Helicase C-terminal domain. At Lys1893 the chain carries N6-acetyllysine; by host. The tract at residues 1950 to 1972 (NPSPITSASAAQRRGRVGRNPNQ) is disordered. The tract at residues 2168-2172 (EELPD) is regulates the ATPase activity of NS3 helicase. Residues 2174-2194 (LETITLIVAITVMTGGFFLLM) form a helical membrane-spanning segment. Residues 2195-2199 (MQRKG) lie on the Lumenal side of the membrane. The helical intramembrane region spans 2200-2220 (IGKMGLGALVLTLATFFLWAA). A topological domain (lumenal) is located at residue Glu2221. Residues 2222–2242 (VPGTKIAGTLLIALLLMVVLI) traverse the membrane as a helical segment. Topologically, residues 2243–2257 (PEPEKQRSQTDNQLA) are cytoplasmic. The chain crosses the membrane as a helical span at residues 2258–2278 (VFLICVLTVVGVVAANEYGML). The Lumenal portion of the chain corresponds to 2279–2311 (EKTKADLKSMFGGKTQASGLTGLPSMALDLRPA). The helical intramembrane region spans 2312-2332 (TAWALYGGSTVVLTPLLKHLI). The Lumenal segment spans residues 2333 to 2368 (TSEYVTTSLASINSQAGSLFVLPRGVPFTDLDLTVG). A helical transmembrane segment spans residues 2369-2389 (LVFLGCWGQITLTTFLTAMVL). Residues 2390–2444 (ATLHYGYMLPGWQAEALRAAQRRTAAGIMKNAVVDGMVATDVPELERTTPLMQKK) are Cytoplasmic-facing. A helical transmembrane segment spans residues 2445-2465 (VGQVLLIGVSVAAFLVNPNVT). Over 2466–2469 (TVRE) the chain is Lumenal. A helical transmembrane segment spans residues 2470–2490 (AGVLVTAATLTLWDNGASAVW). Residues 2491–3432 (NSTTATGLCH…DVLIQEDRVI (942 aa)) are Cytoplasmic-facing. The region spanning 2528–2793 (GRPGGRTLGE…DVNLGSGTRA (266 aa)) is the mRNA cap 0-1 NS5-type MT domain. Ser2583 provides a ligand contact to S-adenosyl-L-methionine. At Ser2583 the chain carries Phosphoserine. Lys2588 acts as the For 2'-O-MTase activity in catalysis. 6 residues coordinate S-adenosyl-L-methionine: Gly2613, Trp2614, Thr2631, Lys2632, Asp2658, and Val2659. Asp2673 acts as the For 2'-O-MTase activity in catalysis. An S-adenosyl-L-methionine-binding site is contributed by Ile2674. Residues Lys2709 and Glu2745 each act as for 2'-O-MTase activity in the active site. Tyr2747 is an S-adenosyl-L-methionine binding site. Glu2967, His2971, Cys2976, and Cys2979 together coordinate Zn(2+). Residues 3057-3209 (GKMYADDTAG…KPLDDRFATA (153 aa)) enclose the RdRp catalytic domain. 3 residues coordinate Zn(2+): His3244, Cys3260, and Cys3379.

In the N-terminal section; belongs to the class I-like SAM-binding methyltransferase superfamily. mRNA cap 0-1 NS5-type methyltransferase family. Homodimer. Interacts (via N-terminus) with host EXOC1 (via C-terminus); this interaction results in EXOC1 degradation through the proteasome degradation pathway. As to quaternary structure, forms heterodimers with envelope protein E in the endoplasmic reticulum and Golgi. In terms of assembly, homodimer; in the endoplasmic reticulum and Golgi. Interacts with protein prM. Interacts with non-structural protein 1. Interacts with host HSPA5. Homodimer; Homohexamer when secreted. Interacts with envelope protein E. NS1 interacts with NS4B. Interacts with host complement protein CFH; this interaction leads to the degradation of C3. As to quaternary structure, interacts (via N-terminus) with serine protease NS3. In terms of assembly, forms a heterodimer with serine protease NS3. May form homooligomers. Forms a heterodimer with NS2B. Interacts with non-structural protein 2A (via N-terminus). Interacts with NS4B. Interacts with unphosphorylated RNA-directed RNA polymerase NS5; this interaction stimulates RNA-directed RNA polymerase NS5 guanylyltransferase activity. Interacts with host ILF2. As to quaternary structure, interacts with serine protease NS3. In terms of assembly, homodimer. Interacts with host STAT2; this interaction inhibits the phosphorylation of the latter, and, when all viral proteins are present (polyprotein), targets STAT2 for degradation. Interacts with serine protease NS3. Mn(2+) is required as a cofactor. Requires Mg(2+) as cofactor. In terms of processing, specific enzymatic cleavages in vivo yield mature proteins. Cleavages in the lumen of endoplasmic reticulum are performed by host signal peptidase, whereas cleavages in the cytoplasmic side are performed by serine protease NS3. Signal cleavage at the 2K-4B site requires a prior NS3 protease-mediated cleavage at the 4A-2K site. Cleaved in post-Golgi vesicles by a host furin, releasing the mature small envelope protein M, and peptide pr. This cleavage is incomplete as up to 30% of viral particles still carry uncleaved prM. Post-translationally, N-glycosylated. In terms of processing, N-glycosylated. The excreted form is glycosylated and this is required for efficient secretion of the protein from infected cells. Acetylated by host KAT5. Acetylation modulates NS3 RNA-binding and unwinding activities and plays an important positive role for viral replication. Post-translationally, phosphorylated on serines residues. This phosphorylation may trigger NS5 nuclear localization.

It localises to the virion. The protein localises to the host nucleus. It is found in the host cytoplasm. Its subcellular location is the host perinuclear region. The protein resides in the secreted. It localises to the virion membrane. The protein localises to the host endoplasmic reticulum membrane. It is found in the host cell surface. It catalyses the reaction Selective hydrolysis of -Xaa-Xaa-|-Yaa- bonds in which each of the Xaa can be either Arg or Lys and Yaa can be either Ser or Ala.. The catalysed reaction is RNA(n) + a ribonucleoside 5'-triphosphate = RNA(n+1) + diphosphate. The enzyme catalyses a ribonucleoside 5'-triphosphate + H2O = a ribonucleoside 5'-diphosphate + phosphate + H(+). It carries out the reaction ATP + H2O = ADP + phosphate + H(+). It catalyses the reaction a 5'-end (5'-triphosphoguanosine)-ribonucleoside in mRNA + S-adenosyl-L-methionine = a 5'-end (N(7)-methyl 5'-triphosphoguanosine)-ribonucleoside in mRNA + S-adenosyl-L-homocysteine. The catalysed reaction is a 5'-end (N(7)-methyl 5'-triphosphoguanosine)-ribonucleoside in mRNA + S-adenosyl-L-methionine = a 5'-end (N(7)-methyl 5'-triphosphoguanosine)-(2'-O-methyl-ribonucleoside) in mRNA + S-adenosyl-L-homocysteine + H(+). In terms of biological role, plays a role in virus budding by binding to the cell membrane and gathering the viral RNA into a nucleocapsid that forms the core of a mature virus particle. During virus entry, may induce genome penetration into the host cytoplasm after hemifusion induced by the surface proteins. Can migrate to the cell nucleus where it modulates host functions. Overcomes the anti-viral effects of host EXOC1 by sequestering and degrading the latter through the proteasome degradation pathway. Its function is as follows. Inhibits RNA silencing by interfering with host Dicer. Prevents premature fusion activity of envelope proteins in trans-Golgi by binding to envelope protein E at pH6.0. After virion release in extracellular space, gets dissociated from E dimers. Functionally, acts as a chaperone for envelope protein E during intracellular virion assembly by masking and inactivating envelope protein E fusion peptide. prM is the only viral peptide matured by host furin in the trans-Golgi network probably to avoid catastrophic activation of the viral fusion activity in acidic Golgi compartment prior to virion release. prM-E cleavage is inefficient, and many virions are only partially matured. These uncleaved prM would play a role in immune evasion. In terms of biological role, may play a role in virus budding. Exerts cytotoxic effects by activating a mitochondrial apoptotic pathway through M ectodomain. May display a viroporin activity. Its function is as follows. Binds to host cell surface receptor and mediates fusion between viral and cellular membranes. Efficient virus attachment to cell is, at least in part, mediated by host HSPA5. Envelope protein is synthesized in the endoplasmic reticulum in the form of heterodimer with protein prM. They play a role in virion budding in the ER, and the newly formed immature particle is covered with 60 spikes composed of heterodimer between precursor prM and envelope protein E. The virion is transported to the Golgi apparatus where the low pH causes dissociation of PrM-E heterodimers and formation of E homodimers. prM-E cleavage is inefficient, and many virions are only partially matured. These uncleaved prM would play a role in immune evasion. Involved in immune evasion, pathogenesis and viral replication. Once cleaved off the polyprotein, is targeted to three destinations: the viral replication cycle, the plasma membrane and the extracellular compartment. Essential for viral replication. Required for formation of the replication complex and recruitment of other non-structural proteins to the ER-derived membrane structures. Excreted as a hexameric lipoparticle that plays a role against host immune response. Antagonizing the complement function. Binds to the host macrophages and dendritic cells. Inhibits signal transduction originating from Toll-like receptor 3 (TLR3). Functionally, component of the viral RNA replication complex that functions in virion assembly and antagonizes the host alpha/beta interferon antiviral response. In terms of biological role, required cofactor for the serine protease function of NS3. May have membrane-destabilizing activity and form viroporins. Its function is as follows. Displays three enzymatic activities: serine protease, NTPase and RNA helicase. NS3 serine protease, in association with NS2B, performs its autocleavage and cleaves the polyprotein at dibasic sites in the cytoplasm: C-prM, NS2A-NS2B, NS2B-NS3, NS3-NS4A, NS4A-2K and NS4B-NS5. NS3 RNA helicase binds RNA and unwinds dsRNA in the 3' to 5' direction. Regulates the ATPase activity of the NS3 helicase activity. NS4A allows NS3 helicase to conserve energy during unwinding. Functionally, functions as a signal peptide for NS4B and is required for the interferon antagonism activity of the latter. In terms of biological role, induces the formation of ER-derived membrane vesicles where the viral replication takes place. Inhibits interferon (IFN)-induced host STAT1 phosphorylation and nuclear translocation, thereby preventing the establishment of cellular antiviral state by blocking the IFN-alpha/beta pathway. Inhibits STAT2 translocation in the nucleus after IFN-alpha treatment. Its function is as follows. Replicates the viral (+) and (-) RNA genome. Performs the capping of genomes in the cytoplasm. NS5 methylates viral RNA cap at guanine N-7 and ribose 2'-O positions. Besides its role in RNA genome replication, also prevents the establishment of cellular antiviral state by blocking the interferon-alpha/beta (IFN-alpha/beta) signaling pathway. Inhibits host TYK2 and STAT2 phosphorylation, thereby preventing activation of JAK-STAT signaling pathway. The protein is Genome polyprotein of Ardeidae (herons).